The primary structure comprises 75 residues: Venom serine protease inhibitor BiVSPI (75 aa).

The signal sequence occupies residues 1 to 20 (MSRILFVFLAVMAIFSTSFG). Disulfide bonds link Cys-23–Cys-55, Cys-32–Cys-51, Cys-35–Cys-47, Cys-39–Cys-75, and Cys-57–Cys-69. The 53-residue stretch at 23-75 (CGLNEEFKSCGSCEPTCAKPRVTICTMECKIGCQCKSGYLRNGEGTCVLPEKC) folds into the TIL domain.

This sequence belongs to the serine protease inhibitor-like (TIL domain-containing) family. May be O-glycosylated. As to expression, expressed by the venom gland (at protein level) and expressed in fat body.

Its subcellular location is the secreted. It localises to the target cell membrane. Antimicrobial venom serine protease inhibitor. Exhibits inhibitory activity against chymotrypsin (IC(50)=19.56 nM, Ki=15.24 nM) and microbial serine proteases, such as subtilisin A (IC(50)=6.57 nM, Ki=6.83 nM) and proteinase K (IC(50)=7.11 nM, Ki=7.02 nM). Has not activity against trypsin, plasmin, tPA, thrombin, factor Xa or elastase. Binds and inhibits Gram-positive bacteria (B.subtilis (MIC=29.45 uM), B.thuringiensis (MIC=91.03 uM)) and the entomopathogenic fungus B.bassiana (MIC=30.09 uM) but not to E.coli. This Bombus ignitus (Bumblebee) protein is Venom serine protease inhibitor BiVSPI.